The chain runs to 549 residues: Tigger transposable element-derived protein 7 (549 aa).

Residues 1–52 form the HTH psq-type domain; sequence MNKRGKYTTLNLEEKMKVLSRIEAGRSLKSVMDEFGISKSTFYDIKKNKKLI. 2 DNA-binding regions (H-T-H motif) span residues 28 to 48 and 101 to 132; these read LKSV…IKKN and VELQ…FRNR. Residues 68–139 form the HTH CENPB-type domain; the sequence is KRKRTTGAKY…RNRHAIGNRK (72 aa). A DDE-1 domain is found at 169–399; the sequence is LCLAQLYSGD…VKQITIANAW (231 aa). The disordered stretch occupies residues 527–549; that stretch reads FLKPRPHNIKDSFSGPSTSGSNH. The segment covering 540–549 has biased composition (polar residues); the sequence is SGPSTSGSNH.

The protein belongs to the tigger transposable element derived protein family. In terms of tissue distribution, expressed in all tissues tested. Higher expression in testis and ovary.

Its subcellular location is the nucleus. The protein is Tigger transposable element-derived protein 7 (TIGD7) of Homo sapiens (Human).